The sequence spans 619 residues: MVNRKWMYIFIQFLLVSSIRSDDDVFEDDEEEVTKGSDDKEEFVPSLFVAPKLSDKSTPNFFDYFPVGSKIGLTWIKSLAKKDDVDSDIAKYNGEWSIGAPTKVSIEGDLGLIVKTKARHHAIAAKLNTPFAFDANTFVVQYDIKFEEGQECGGGYLKLLSEGAEKDLANFQDKTAYTIMFGPDKCGATGKVHLIFRYKNPINGTISEYHANQPTTIGSTYWDDHNTHLFTLVVKPTGEYSVSVDGKSLYYGNMMSDVTPALTPPKQIFDETDLKPVDWDERENIEDESAVKPDDWDENEPQSVVDEAATKPYDWNEEENELIADPEAKKPQDWDEDMDGSWEAPLIDNPACKGLSGCGTWKAPTIKNPKYKGKWIRPKISNPAFKGKWTARLIDNPNYFEPKPFAGLAPITAVGIEMWTMSENILFDNILITSSEEDSSDVAKQTFYVKQKEEYRLAAATGNGNGFFQQIIDATNEKPWLWAVYILCVLLPLVAIGVFCFGKQSKPTPNFAKKSDAYSADDDRVPNLVDDDEEEIIGDEEDDVNQPGPSGSQSNPEPQDEEENAEQQSANSSQSSAAEEEDDEHVVPENEPVKPTEEFAKKSPKNTGGAKRRTARRGD.

Residues 1–21 (MVNRKWMYIFIQFLLVSSIRS) form the signal peptide. Asp-109 is a binding site for Ca(2+). A disulfide bridge links Cys-152 with Cys-186. An alpha-D-glucoside contacts are provided by Tyr-156, Lys-158, Tyr-177, and Asp-184. N-linked (GlcNAc...) asparagine glycosylation is present at Asn-203. Residues 268-401 (IFDETDLKPV…RLIDNPNYFE (134 aa)) form a p domain (Extended arm) region. 5 repeat units span residues 270 to 282 (DETD…WDER), 287 to 299 (DESA…WDEN), 306 to 318 (DEAA…WNEE), 325 to 337 (DPEA…WDED), and 340 to 350 (GSWEAPLIDNP). 2 4 X approximate repeats regions span residues 270 to 337 (DETD…WDED) and 340 to 397 (GSWE…IDNP). Cysteines 352 and 358 form a disulfide. 3 repeat units span residues 359–369 (GTWKAPTIKNP), 373–383 (GKWIRPKISNP), and 387–397 (GKWTARLIDNP). Glu-417 provides a ligand contact to an alpha-D-glucoside. Asp-428 serves as a coordination point for Ca(2+). Residues 481 to 501 (LWAVYILCVLLPLVAIGVFCF) traverse the membrane as a helical segment. Residues 538 to 619 (GDEEDDVNQP…AKRRTARRGD (82 aa)) are disordered. The span at 547–557 (PGPSGSQSNPE) shows a compositional bias: polar residues. Residues 566-577 (EQQSANSSQSSA) show a composition bias toward low complexity. Asn-571 carries N-linked (GlcNAc...) asparagine glycosylation. Positions 585–601 (HVVPENEPVKPTEEFAK) are enriched in basic and acidic residues. Residues 610–619 (AKRRTARRGD) show a composition bias toward basic residues.

The protein belongs to the calreticulin family. Glycosylation is important for its biological activity. In terms of tissue distribution, expressed ubiquitously in every blastomere of the embryo up to the gastrulation stage. Expression becomes gradually restricted to the head and tail regions at the comma stage during embryogenesis. During postembryonic development, expressed prominently in the H-shaped excretory cell, in the neurons of head (including ASK and ADL) and tail (including PHA and PHB), in the dorsal and ventral nerve cords, and in the spermatheca. Expressed in the spicules of the male tail (at protein level).

It is found in the endoplasmic reticulum membrane. Its subcellular location is the cytoplasm. The protein localises to the perinuclear region. The protein resides in the cytoplasmic vesicle. Its function is as follows. Calcium-binding protein that interacts with newly synthesized monoglucosylated glycoproteins in the endoplasmic reticulum. It may act in assisting protein assembly and/or in the retention within the ER of unassembled protein subunits. It seems to play a major role in the quality control apparatus of the ER by the retention of incorrectly folded proteins. Required for embryogenesis and larval development under heat and ER stress conditions. May be important for germ cell development. Involved in neuronal necrotic cell death. The sequence is that of Calnexin (cnx-1) from Caenorhabditis elegans.